Consider the following 143-residue polypeptide: Lysozyme C (143 aa).

A signal peptide spans 1-15 (MKIPVFLLLLALANA). The 128-residue stretch at 16–143 (KVFQRCEWAR…LSAYIAGCGL (128 aa)) folds into the C-type lysozyme domain. Disulfide bonds link Cys21–Cys141, Cys45–Cys129, Cys79–Cys94, and Cys90–Cys108. Residues Glu50 and Asp67 contribute to the active site.

Belongs to the glycosyl hydrolase 22 family. Monomer.

It localises to the secreted. It catalyses the reaction Hydrolysis of (1-&gt;4)-beta-linkages between N-acetylmuramic acid and N-acetyl-D-glucosamine residues in a peptidoglycan and between N-acetyl-D-glucosamine residues in chitodextrins.. Lysozymes have primarily a bacteriolytic function; those in tissues and body fluids are associated with the monocyte-macrophage system and enhance the activity of immunoagents. The chain is Lysozyme C from Takifugu rubripes (Japanese pufferfish).